A 402-amino-acid chain; its full sequence is Deoxyguanosinetriphosphate triphosphohydrolase-like protein (402 aa).

The tract at residues 20 to 39 is disordered; that stretch reads PAFSRGRLVPEPESPTRTPF. The region spanning 73–217 is the HD domain; it reads RLTHTIEVAQ…AAIADDIAYN (145 aa).

Belongs to the dGTPase family. Type 2 subfamily.

In Brucella canis (strain ATCC 23365 / NCTC 10854 / RM-666), this protein is Deoxyguanosinetriphosphate triphosphohydrolase-like protein.